A 624-amino-acid chain; its full sequence is Alpha-mannosidase I MNS4 (624 aa).

Topologically, residues 1 to 7 are cytoplasmic; that stretch reads MDSNFKW. A helical; Signal-anchor for type II membrane protein membrane pass occupies residues 8–28; the sequence is LLFAILISLTFSGFVLHHGVL. Residues 29 to 624 lie on the Lumenal side of the membrane; that stretch reads AESVKPDEAK…ETDDQRSYSS (596 aa). Asparagine 115 carries an N-linked (GlcNAc...) asparagine glycan. Glutamate 122 acts as the Proton donor in catalysis. Aspartate 262 is a catalytic residue. Residue glutamate 355 is the Proton donor of the active site. Glutamate 376 is a catalytic residue. Threonine 466 contacts Ca(2+). A glycan (N-linked (GlcNAc...) asparagine) is linked at asparagine 494. The disordered stretch occupies residues 574–624; sequence QTVEKRPQEEEGFTSQSEPIMTISGGSSNDQTGQELTLLESETDDQRSYSS. Residues 586 to 608 show a composition bias toward polar residues; it reads FTSQSEPIMTISGGSSNDQTGQE.

Belongs to the glycosyl hydrolase 47 family. The cofactor is Ca(2+).

It localises to the endoplasmic reticulum membrane. The protein operates within protein modification; protein glycosylation. Its function is as follows. Can convert Man(9)GlcNAc(2) and Man(8)GlcNAc(2) into N-glycans with a terminal alpha-1,6-linked Man residue in the C-branch. Functions in the formation of unique N-glycan structures that are specifically recognized by components of the endoplasmic reticulum-associated degradation (ERAD) machinery, which leads to the degradation of misfolded glycoproteins. Most likely generates N-glycan signal on misfolded glycoproteins that is subsequently recognized by OS9. Required for ERAD of the heavily glycosylated and misfolded BRI1 variants BRI1-5 and BRI1-9. Does not seem to play role in N-glycan processing of correctly folded proteins destined for secretion. This is Alpha-mannosidase I MNS4 (MNS4) from Arabidopsis thaliana (Mouse-ear cress).